The following is a 655-amino-acid chain: Kelch-like protein 13 (655 aa).

Residues 92 to 161 (CDVTLMPGDT…IYTAKLSLNM (70 aa)) enclose the BTB domain. In terms of domain architecture, BACK spans 196 to 297 (CVEVGRIANT…TPQELINYVQ (102 aa)). 6 Kelch repeats span residues 341-389 (HLVT…VIGN), 390-441 (FLYV…ALKG), 442-488 (YLYA…VYGG), 490-535 (MYIS…TVGE), 537-587 (LYVI…VFEN), and 588-636 (KIYV…TLTV).

Component of the BCR(KLHL9-KLHL13) E3 ubiquitin ligase complex, at least composed of CUL3, KLHL9, KLHL13 and RBX1. Interacts with AURKB.

Its pathway is protein modification; protein ubiquitination. In terms of biological role, substrate-specific adapter of a BCR (BTB-CUL3-RBX1) E3 ubiquitin-protein ligase complex required for mitotic progression and cytokinesis. The BCR(KLHL9-KLHL13) E3 ubiquitin ligase complex mediates the ubiquitination of AURKB and controls the dynamic behavior of AURKB on mitotic chromosomes and thereby coordinates faithful mitotic progression and completion of cytokinesis. In Bos taurus (Bovine), this protein is Kelch-like protein 13 (KLHL13).